Reading from the N-terminus, the 197-residue chain is Large ribosomal subunit protein uL10 (197 aa).

A disordered region spans residues 162–197 (GGASAPAAEEAPAAEEAAAEEVAAPAEAAEAATEEN). The segment covering 163 to 197 (GASAPAAEEAPAAEEAAAEEVAAPAEAAEAATEEN) has biased composition (low complexity).

The protein belongs to the universal ribosomal protein uL10 family. As to quaternary structure, part of the ribosomal stalk of the 50S ribosomal subunit. The N-terminus interacts with L11 and the large rRNA to form the base of the stalk. The C-terminus forms an elongated spine to which L12 dimers bind in a sequential fashion forming a multimeric L10(L12)X complex.

Forms part of the ribosomal stalk, playing a central role in the interaction of the ribosome with GTP-bound translation factors. The sequence is that of Large ribosomal subunit protein uL10 from Paenarthrobacter aurescens (strain TC1).